Reading from the N-terminus, the 518-residue chain is ATP synthase subunit alpha (518 aa).

169–176 is a binding site for ATP; sequence GDRQTGKT.

The protein belongs to the ATPase alpha/beta chains family. F-type ATPases have 2 components, CF(1) - the catalytic core - and CF(0) - the membrane proton channel. CF(1) has five subunits: alpha(3), beta(3), gamma(1), delta(1), epsilon(1). CF(0) has three main subunits: a(1), b(2) and c(9-12). The alpha and beta chains form an alternating ring which encloses part of the gamma chain. CF(1) is attached to CF(0) by a central stalk formed by the gamma and epsilon chains, while a peripheral stalk is formed by the delta and b chains.

It is found in the cell membrane. It catalyses the reaction ATP + H2O + 4 H(+)(in) = ADP + phosphate + 5 H(+)(out). In terms of biological role, produces ATP from ADP in the presence of a proton gradient across the membrane. The alpha chain is a regulatory subunit. This chain is ATP synthase subunit alpha, found in Mycoplasma pneumoniae (strain ATCC 29342 / M129 / Subtype 1) (Mycoplasmoides pneumoniae).